We begin with the raw amino-acid sequence, 218 residues long: Octanoyltransferase (218 aa).

Positions Arg-31–Glu-206 constitute a BPL/LPL catalytic domain. Substrate contacts are provided by residues Arg-70–His-77, Ser-137–Gly-139, and Gly-150–Ala-152. The Acyl-thioester intermediate role is filled by Cys-168.

Belongs to the LipB family.

The protein resides in the cytoplasm. The enzyme catalyses octanoyl-[ACP] + L-lysyl-[protein] = N(6)-octanoyl-L-lysyl-[protein] + holo-[ACP] + H(+). The protein operates within protein modification; protein lipoylation via endogenous pathway; protein N(6)-(lipoyl)lysine from octanoyl-[acyl-carrier-protein]: step 1/2. Catalyzes the transfer of endogenously produced octanoic acid from octanoyl-acyl-carrier-protein onto the lipoyl domains of lipoate-dependent enzymes. Lipoyl-ACP can also act as a substrate although octanoyl-ACP is likely to be the physiological substrate. The chain is Octanoyltransferase from Pseudomonas syringae pv. syringae (strain B728a).